A 636-amino-acid polypeptide reads, in one-letter code: ATP-dependent DNA helicase YoaA (636 aa).

In terms of domain architecture, Helicase ATP-binding spans 10–272 (QLAKAIPGFK…KDTQQLQKCA (263 aa)). 45-52 (AGTGTGKT) serves as a coordination point for ATP. [4Fe-4S] cluster is bound by residues cysteine 108, cysteine 168, cysteine 173, and cysteine 179. The DEAH box signature appears at 225–228 (DEAH).

Belongs to the helicase family. DinG subfamily. As to quaternary structure, interacts with the DNA polymerase III subunit Chi (holC), probably as a 1:1 complex. [4Fe-4S] cluster is required as a cofactor. The cofactor is Mg(2+).

It carries out the reaction Couples ATP hydrolysis with the unwinding of duplex DNA at the replication fork by translocating in the 5'-3' direction. This creates two antiparallel DNA single strands (ssDNA). The leading ssDNA polymer is the template for DNA polymerase III holoenzyme which synthesizes a continuous strand.. It catalyses the reaction ATP + H2O = ADP + phosphate + H(+). Its activity is regulated as follows. Non-hydrolyzable ATP analogs ATP-gamma-S and adenylyl-imidodiphosphate (AMP-PNP) inhibit helicase activity. DNA-dependent ATPase and 5'-3' DNA helicase. Has single-stranded (ss)DNA-dependent ATPase activity and 5'-3' helicase activity on forked DNA; both activities were measure in a YoaA:HolC (chi) complex. Requires a 20-35 nucleotide (nt) 5'-ssDNA tail; dsDNA with a 20 nt gap is also unwound. Unwinds damaged 3' nascent ends (such as those terminated by 3' azidothymidine (AZT), 3' dideoxy-C or an abasic site on the translocating strand), to promote repair and AZT excision. Without HolC the protein has much lower activity which could be due to YoaA instability or helicase stimulation by HolC. Genetically identified as involved in the repair of replication forks and tolerance of the chain-terminating nucleoside analog AZT. May act in proofreading during nucleotide misincorporation, it appears to aid in the removal of potential A-to-T transversion mutations in ndk mutants. In Escherichia coli (strain K12), this protein is ATP-dependent DNA helicase YoaA (yoaA).